A 382-amino-acid chain; its full sequence is Osmoprotectant import ATP-binding protein OsmV (382 aa).

Positions 2 to 241 constitute an ABC transporter domain; that stretch reads IKLENLTKQF…PANEFVGSFV (240 aa). An ATP-binding site is contributed by 39–46; it reads GPSGCGKT. 2 consecutive CBS domains span residues 258–320 and 322–373; these read VTDQ…THPF and ITGK…GRTR.

It belongs to the ABC transporter superfamily. As to quaternary structure, the complex is composed of two ATP-binding proteins (OsmV), two transmembrane proteins (OsmW and OsmY) and a solute-binding protein (OsmX).

It is found in the cell inner membrane. Part of the OsmU ABC transporter complex, which is involved in the uptake of osmoprotectants such as choline-O-sulfate and glycine betaine. Probably responsible for energy coupling to the transport system. The chain is Osmoprotectant import ATP-binding protein OsmV (osmV) from Salmonella typhimurium (strain LT2 / SGSC1412 / ATCC 700720).